The chain runs to 180 residues: NADH-quinone oxidoreductase subunit I (180 aa).

2 4Fe-4S ferredoxin-type domains span residues 48 to 80 (IVLT…LQKA) and 90 to 119 (EFFR…LTPD). [4Fe-4S] cluster-binding residues include C60, C63, C66, C70, C99, C102, C105, and C109. The segment at 160–180 (GKPKGSAQKEAAPIDVKSILP) is disordered.

Belongs to the complex I 23 kDa subunit family. As to quaternary structure, NDH-1 is composed of 14 different subunits. Subunits NuoA, H, J, K, L, M, N constitute the membrane sector of the complex. It depends on [4Fe-4S] cluster as a cofactor.

It localises to the cell inner membrane. It carries out the reaction a quinone + NADH + 5 H(+)(in) = a quinol + NAD(+) + 4 H(+)(out). Its function is as follows. NDH-1 shuttles electrons from NADH, via FMN and iron-sulfur (Fe-S) centers, to quinones in the respiratory chain. The immediate electron acceptor for the enzyme in this species is believed to be ubiquinone. Couples the redox reaction to proton translocation (for every two electrons transferred, four hydrogen ions are translocated across the cytoplasmic membrane), and thus conserves the redox energy in a proton gradient. This chain is NADH-quinone oxidoreductase subunit I, found in Tolumonas auensis (strain DSM 9187 / NBRC 110442 / TA 4).